A 152-amino-acid polypeptide reads, in one-letter code: Ribosomal RNA large subunit methyltransferase H (152 aa).

Residues leucine 70, glycine 101, and leucine 120 to phenylalanine 125 contribute to the S-adenosyl-L-methionine site.

The protein belongs to the RNA methyltransferase RlmH family. Homodimer.

It is found in the cytoplasm. It catalyses the reaction pseudouridine(1915) in 23S rRNA + S-adenosyl-L-methionine = N(3)-methylpseudouridine(1915) in 23S rRNA + S-adenosyl-L-homocysteine + H(+). Functionally, specifically methylates the pseudouridine at position 1915 (m3Psi1915) in 23S rRNA. This is Ribosomal RNA large subunit methyltransferase H from Pseudothermotoga lettingae (strain ATCC BAA-301 / DSM 14385 / NBRC 107922 / TMO) (Thermotoga lettingae).